A 396-amino-acid polypeptide reads, in one-letter code: Seminal vesicle major clotting proteins (396 aa).

Residues methionine 1–glycine 21 form the signal peptide. Residues methionine 45–glycine 178 are disordered. Residues arginine 60 to glutamate 152 are compositionally biased toward basic and acidic residues. SVP-3/-4 repeat repeat units lie at residues glutamate 65–valine 88, glutamate 89–valine 112, and glutamate 113–alanine 136. The SVP-3/-4 repeat; truncated repeat unit spans residues glutamate 137 to arginine 157. The propeptide occupies lysine 177 to alanine 192. SVP-1 clotting repeat units follow at residues isoleucine 194–serine 217, valine 218–serine 241, valine 242–serine 265, methionine 266–serine 289, methionine 290–serine 313, valine 314–serine 337, valine 338–serine 361, and valine 362–serine 385. The segment at isoleucine 194 to isoleucine 396 is 9 X tandem repeats of SVP-1 like motif. The disordered stretch occupies residues glutamine 377 to isoleucine 396. The stretch at valine 386–isoleucine 396 is one SVP-1 clotting 9; truncated repeat.

The protein to the SVP-2 precursor, particularly in regions where protein processing must occur. SVP-3 may be a post-translationally modified form of SVP-4. Post-translationally, covalent clotting of SVP-1 is catalyzed by a transglutaminase secreted by the anterior prostate through the formation of gamma-glutamyl-epsilon-lysine cross-links. The conserved 2 Lys and 1 Gln residues per functional unit seem to be the residues involved in the formation of those cross-links.

It localises to the secreted. Functionally, SVP-1 serves as substrate in the formation of the copulatory plug. SVP-3 and SVP-4 may also contribute to the clot. The sequence is that of Seminal vesicle major clotting proteins from Cavia porcellus (Guinea pig).